A 388-amino-acid polypeptide reads, in one-letter code: Succinate--CoA ligase [ADP-forming] subunit beta (388 aa).

An ATP-grasp domain is found at 9 to 244 (KQLFAEFGLP…PSQEDEREAH (236 aa)). ATP is bound by residues Lys46, 53-55 (GRG), Glu99, Ser102, and Glu107. Mg(2+)-binding residues include Asn199 and Asp213. Substrate-binding positions include Asn264 and 321-323 (GIV).

The protein belongs to the succinate/malate CoA ligase beta subunit family. As to quaternary structure, heterotetramer of two alpha and two beta subunits. Requires Mg(2+) as cofactor.

It catalyses the reaction succinate + ATP + CoA = succinyl-CoA + ADP + phosphate. The enzyme catalyses GTP + succinate + CoA = succinyl-CoA + GDP + phosphate. The protein operates within carbohydrate metabolism; tricarboxylic acid cycle; succinate from succinyl-CoA (ligase route): step 1/1. Succinyl-CoA synthetase functions in the citric acid cycle (TCA), coupling the hydrolysis of succinyl-CoA to the synthesis of either ATP or GTP and thus represents the only step of substrate-level phosphorylation in the TCA. The beta subunit provides nucleotide specificity of the enzyme and binds the substrate succinate, while the binding sites for coenzyme A and phosphate are found in the alpha subunit. This is Succinate--CoA ligase [ADP-forming] subunit beta from Aliivibrio fischeri (strain ATCC 700601 / ES114) (Vibrio fischeri).